A 151-amino-acid polypeptide reads, in one-letter code: Deoxyuridine 5'-triphosphate nucleotidohydrolase (151 aa).

Residues 70 to 72 (RSG), Asn83, 87 to 89 (LID), and Met97 contribute to the substrate site.

Belongs to the dUTPase family. In terms of assembly, homotrimer. The cofactor is Mg(2+).

It carries out the reaction dUTP + H2O = dUMP + diphosphate + H(+). The protein operates within pyrimidine metabolism; dUMP biosynthesis; dUMP from dCTP (dUTP route): step 2/2. Functionally, this enzyme is involved in nucleotide metabolism: it produces dUMP, the immediate precursor of thymidine nucleotides and it decreases the intracellular concentration of dUTP so that uracil cannot be incorporated into DNA. The protein is Deoxyuridine 5'-triphosphate nucleotidohydrolase of Escherichia coli O45:K1 (strain S88 / ExPEC).